We begin with the raw amino-acid sequence, 107 residues long: Nitrogenase-stabilizing/protective protein NifW (107 aa).

This sequence belongs to the NifW family. As to quaternary structure, homotrimer; associates with NifD.

May protect the nitrogenase Fe-Mo protein from oxidative damage. This is Nitrogenase-stabilizing/protective protein NifW from Gloeothece citriformis (strain PCC 7424) (Cyanothece sp. (strain PCC 7424)).